Reading from the N-terminus, the 41-residue chain is U-megalopygitoxin(11)-Mo28 (41 aa).

A signal peptide spans 1–29; the sequence is MRTTLLLLIIAITVMVFVSEAYAAPAPEP.

The protein belongs to the caterpillar 11 family. As to expression, expressed by the venom apparatus.

The protein localises to the secreted. Its function is as follows. Probable toxin. This chain is U-megalopygitoxin(11)-Mo28, found in Megalopyge opercularis (Southern flannel moth).